A 130-amino-acid polypeptide reads, in one-letter code: Fumarate reductase subunit C (130 aa).

The next 3 membrane-spanning stretches (helical) occupy residues 37-57 (VWFS…PAGW), 60-80 (FVGF…LLAA), and 109-129 (VIKA…AVAL).

It belongs to the FrdC family. Part of an enzyme complex containing four subunits: a flavoprotein (FrdA), an iron-sulfur protein (FrdB), and two hydrophobic anchor proteins (FrdC and FrdD).

The protein localises to the cell inner membrane. Functionally, two distinct, membrane-bound, FAD-containing enzymes are responsible for the catalysis of fumarate and succinate interconversion; fumarate reductase is used in anaerobic growth, and succinate dehydrogenase is used in aerobic growth. Anchors the catalytic components of the fumarate reductase complex to the cell inner membrane, binds quinones. In Yersinia enterocolitica serotype O:8 / biotype 1B (strain NCTC 13174 / 8081), this protein is Fumarate reductase subunit C.